The chain runs to 500 residues: NAD(P)H-quinone oxidoreductase chain 4, chloroplastic (500 aa).

Helical transmembrane passes span 4-24 (FPWLTIIVGFPISAGSLMLFL), 35-55 (YTICICILELLITTYAFCYNF), 87-107 (IGTILLTGFITTLAALAAFPV), 113-130 (FFHFLMLAMYSGQIGSFS), 134-154 (LLLFFIMWELELIPVYLLLSM), 167-187 (FILYTAGSSIFLLIGVLGISL), 211-231 (ILFYIGFLIAFAVKSPIIPLH), 242-262 (HYSTCMLLAGILLKMGAYGLV), 272-292 (AHSMFSPWLMVVGTIQIIYAA), 305-325 (IAYSSVSHMGFIIIGIGSITD), 330-350 (GAILQIISHGFIGAALFFLAG), 386-406 (LALPGMSGFVAELIVFFGIIT), 416-436 (ILIIFVMAIGMILTPIYLLSM), and 462-482 (LFLSISILLPIIGIGIYPDFV).

It belongs to the complex I subunit 4 family.

It is found in the plastid. The protein localises to the chloroplast thylakoid membrane. The enzyme catalyses a plastoquinone + NADH + (n+1) H(+)(in) = a plastoquinol + NAD(+) + n H(+)(out). The catalysed reaction is a plastoquinone + NADPH + (n+1) H(+)(in) = a plastoquinol + NADP(+) + n H(+)(out). In Arabis hirsuta (Hairy rock-cress), this protein is NAD(P)H-quinone oxidoreductase chain 4, chloroplastic.